Consider the following 439-residue polypeptide: Divalent metal cation transporter MntH 1 (439 aa).

9 consecutive transmembrane segments (helical) span residues 64–84 (FGYA…LLQS), 139–161 (LLGV…VLAL), 171–191 (AIVL…LVLI), 214–234 (PLYL…LYLH), 262–282 (IGSL…AAAA), 300–320 (LLDP…ALLA), 359–379 (LVPA…KLLV), 380–400 (LSQV…IRFS), and 418–438 (LAWS…YFWF).

Belongs to the NRAMP family.

The protein resides in the cell inner membrane. Its function is as follows. H(+)-stimulated, divalent metal cation uptake system. This chain is Divalent metal cation transporter MntH 1, found in Pseudomonas aeruginosa (strain ATCC 15692 / DSM 22644 / CIP 104116 / JCM 14847 / LMG 12228 / 1C / PRS 101 / PAO1).